The chain runs to 469 residues: MSSGKITQVIGPVVDVEFGSDAKLPEINNALIVYKDVNGLKTKITLEVALELGDGAVRTIAMESTDGLTRGLEVLDTGKAVSVPVGESTLGRVFNVLGDVIDGGEDFPADAERNPIHKKAPTFDELSTANEVLVTGIKVVDLLAPYLKGGKVGLFGGAGVGKTVLIQELIHNIAQEHGGISVFTGVGERTREGNDLYWEMKESGVIEKTAMVFGQMNEPPGARMRVALTGLTIAEYFRDVQGQDVLLFIDNIFRFTQAGSEVSALLGRMPSAVGYQPTLATEMGQLQERITSTKKGSVTSIQAIYVPADDYTDPAPATAFAHLDATTNLERRLTQMGIYPAVDPLASSSRALTPEIVGEEHYEVAMEVQRVLQRYKELQDIIAILGMDELSDDEKILVGRARRIQFFLSQNFHVAEQFTGQPGSYVPIDKTVHDFKEILEGKYDEVPEDAFRGVGPIEDVLAKAKSMGY.

156 to 163 (GGAGVGKT) is a binding site for ATP.

The protein belongs to the ATPase alpha/beta chains family. F-type ATPases have 2 components, CF(1) - the catalytic core - and CF(0) - the membrane proton channel. CF(1) has five subunits: alpha(3), beta(3), gamma(1), delta(1), epsilon(1). CF(0) has three main subunits: a(1), b(2) and c(9-12). The alpha and beta chains form an alternating ring which encloses part of the gamma chain. CF(1) is attached to CF(0) by a central stalk formed by the gamma and epsilon chains, while a peripheral stalk is formed by the delta and b chains.

It localises to the cell membrane. The catalysed reaction is ATP + H2O + 4 H(+)(in) = ADP + phosphate + 5 H(+)(out). Functionally, produces ATP from ADP in the presence of a proton gradient across the membrane. The catalytic sites are hosted primarily by the beta subunits. The chain is ATP synthase subunit beta from Lactococcus lactis subsp. cremoris (strain MG1363).